Reading from the N-terminus, the 353-residue chain is Photosystem II protein D1 (353 aa).

Residue threonine 2 is modified to N-acetylthreonine. Phosphothreonine is present on threonine 2. 3 helical membrane-spanning segments follow: residues 29 to 46 (YIGW…TATS), 118 to 133 (HFLL…EWEL), and 142 to 156 (WIAV…AATA). Chlorophyll a is bound at residue histidine 118. Position 126 (tyrosine 126) interacts with pheophytin a. 2 residues coordinate [CaMn4O5] cluster: aspartate 170 and glutamate 189. The helical transmembrane segment at 197 to 218 (FHMLGVAGVFGGSLFSAMHGSL) threads the bilayer. Chlorophyll a is bound at residue histidine 198. Residues histidine 215 and 264–265 (SF) contribute to the a quinone site. Histidine 215 contributes to the Fe cation binding site. Position 272 (histidine 272) interacts with Fe cation. The chain crosses the membrane as a helical span at residues 274 to 288 (FLAAWPVVGIWFTAL). Histidine 332, glutamate 333, aspartate 342, and alanine 344 together coordinate [CaMn4O5] cluster. Residues 345-353 (AVEVPSTNG) constitute a propeptide that is removed on maturation.

Belongs to the reaction center PufL/M/PsbA/D family. PSII is composed of 1 copy each of membrane proteins PsbA, PsbB, PsbC, PsbD, PsbE, PsbF, PsbH, PsbI, PsbJ, PsbK, PsbL, PsbM, PsbT, PsbX, PsbY, PsbZ, Psb30/Ycf12, at least 3 peripheral proteins of the oxygen-evolving complex and a large number of cofactors. It forms dimeric complexes. The D1/D2 heterodimer binds P680, chlorophylls that are the primary electron donor of PSII, and subsequent electron acceptors. It shares a non-heme iron and each subunit binds pheophytin, quinone, additional chlorophylls, carotenoids and lipids. D1 provides most of the ligands for the Mn4-Ca-O5 cluster of the oxygen-evolving complex (OEC). There is also a Cl(-1) ion associated with D1 and D2, which is required for oxygen evolution. The PSII complex binds additional chlorophylls, carotenoids and specific lipids. serves as cofactor. Tyr-161 forms a radical intermediate that is referred to as redox-active TyrZ, YZ or Y-Z. In terms of processing, C-terminally processed by CTPA; processing is essential to allow assembly of the oxygen-evolving complex and thus photosynthetic growth.

Its subcellular location is the plastid. It is found in the chloroplast thylakoid membrane. The enzyme catalyses 2 a plastoquinone + 4 hnu + 2 H2O = 2 a plastoquinol + O2. Functionally, photosystem II (PSII) is a light-driven water:plastoquinone oxidoreductase that uses light energy to abstract electrons from H(2)O, generating O(2) and a proton gradient subsequently used for ATP formation. It consists of a core antenna complex that captures photons, and an electron transfer chain that converts photonic excitation into a charge separation. The D1/D2 (PsbA/PsbD) reaction center heterodimer binds P680, the primary electron donor of PSII as well as several subsequent electron acceptors. The chain is Photosystem II protein D1 from Calycanthus floridus var. glaucus (Eastern sweetshrub).